A 124-amino-acid chain; its full sequence is Insulin-like growth factor 1 (124 aa).

Positions 1 to 19 (IHFFYLGLCLLTLTSSAAA) are excised as a propeptide. A b region spans residues 20-48 (GPETLCGAELVDALQFVCGDRGFYFSKPT). 3 cysteine pairs are disulfide-bonded: Cys-25–Cys-67, Cys-37–Cys-80, and Cys-66–Cys-71. The tract at residues 49 to 60 (GYGSSSRRLHHK) is c. The a stretch occupies residues 61–81 (GIVDECCFQSCDLRRLEMYCA). The tract at residues 82–89 (PIKPPKSA) is d. Residues 86-124 (PKSARSVRAQRHTDMPKAQKEVHLKNTSRGNTGNRNYRM) form a disordered region. Positions 90–124 (RSVRAQRHTDMPKAQKEVHLKNTSRGNTGNRNYRM) are cleaved as a propeptide — e peptide. Over residues 96–109 (RHTDMPKAQKEVHL) the composition is skewed to basic and acidic residues. The span at 110 to 124 (KNTSRGNTGNRNYRM) shows a compositional bias: polar residues.

This sequence belongs to the insulin family.

It is found in the secreted. In terms of biological role, the insulin-like growth factors, isolated from plasma, are structurally and functionally related to insulin but have a much higher growth-promoting activity. Acts as a ligand for IGF1R. Binds to the alpha subunit of IGF1R, leading to the activation of the intrinsic tyrosine kinase activity which autophosphorylates tyrosine residues in the beta subunit thus initiatiating a cascade of down-stream signaling events leading to activation of the PI3K-AKT/PKB and the Ras-MAPK pathways. Binds to integrins. Its binding to integrins and subsequent ternary complex formation with integrins and IGFR1 are essential for IGF1 signaling. This is Insulin-like growth factor 1 from Coturnix japonica (Japanese quail).